The sequence spans 86 residues: Large ribosomal subunit protein uL23 (86 aa).

This sequence belongs to the universal ribosomal protein uL23 family. As to quaternary structure, part of the 50S ribosomal subunit. Contacts protein L29.

Functionally, binds to 23S rRNA. One of the proteins that surrounds the polypeptide exit tunnel on the outside of the ribosome. The chain is Large ribosomal subunit protein uL23 from Methanococcus maripaludis (strain DSM 14266 / JCM 13030 / NBRC 101832 / S2 / LL).